Here is a 272-residue protein sequence, read N- to C-terminus: Shikimate dehydrogenase (NADP(+)) (272 aa).

Residues 14-16 and Thr61 each bind shikimate; that span reads SKS. Lys65 functions as the Proton acceptor in the catalytic mechanism. An NADP(+)-binding site is contributed by Glu77. Positions 86 and 102 each coordinate shikimate. NADP(+) is bound by residues 126–130, 149–154, and Met213; these read GAGGA and NRTVSR. Tyr215 is a binding site for shikimate. Position 237 (Gly237) interacts with NADP(+).

It belongs to the shikimate dehydrogenase family. As to quaternary structure, homodimer.

It catalyses the reaction shikimate + NADP(+) = 3-dehydroshikimate + NADPH + H(+). It functions in the pathway metabolic intermediate biosynthesis; chorismate biosynthesis; chorismate from D-erythrose 4-phosphate and phosphoenolpyruvate: step 4/7. Its function is as follows. Involved in the biosynthesis of the chorismate, which leads to the biosynthesis of aromatic amino acids. Catalyzes the reversible NADPH linked reduction of 3-dehydroshikimate (DHSA) to yield shikimate (SA). This Escherichia coli O157:H7 protein is Shikimate dehydrogenase (NADP(+)).